Here is a 289-residue protein sequence, read N- to C-terminus: Homeobox protein Nkx-2.6 (289 aa).

Disordered regions lie at residues 75 to 125 (GSNP…PQRK) and 259 to 289 (TPLASSGFSPGGQSAAPQGHLPATPQGVTAW). Residues 123-182 (QRKSRVLFSQAQVLALERRFKQQRYLTAPEREHLASALQLTSTQVKIWFQNRRYKSKSQR) constitute a DNA-binding region (homeobox). Over residues 261–274 (LASSGFSPGGQSAA) the composition is skewed to polar residues.

It belongs to the NK-2 homeobox family. As to expression, not detected in any neonate or adult tissues.

The protein localises to the nucleus. Acts as a transcriptional activator. In conjunction with NKX2-5, may play a role in both pharyngeal and cardiac embryonic development. The protein is Homeobox protein Nkx-2.6 (Nkx2-6) of Mus musculus (Mouse).